The chain runs to 443 residues: Phosphoglucosamine mutase (443 aa).

Residue Ser101 is the Phosphoserine intermediate of the active site. Positions 101, 239, 241, and 243 each coordinate Mg(2+). The residue at position 101 (Ser101) is a Phosphoserine.

The protein belongs to the phosphohexose mutase family. Mg(2+) serves as cofactor. Post-translationally, activated by phosphorylation.

It catalyses the reaction alpha-D-glucosamine 1-phosphate = D-glucosamine 6-phosphate. Functionally, catalyzes the conversion of glucosamine-6-phosphate to glucosamine-1-phosphate. The protein is Phosphoglucosamine mutase of Francisella tularensis subsp. holarctica (strain FTNF002-00 / FTA).